The chain runs to 159 residues: Probable cyclic pyranopterin monophosphate synthase accessory protein (159 aa).

Asp128 is an active-site residue.

It belongs to the MoaC family.

It functions in the pathway cofactor biosynthesis; molybdopterin biosynthesis. Together with MoaA, is involved in the conversion of 5'-GTP to cyclic pyranopterin monophosphate (cPMP or molybdopterin precursor Z). The sequence is that of Probable cyclic pyranopterin monophosphate synthase accessory protein from Methanothermobacter thermautotrophicus (strain ATCC 29096 / DSM 1053 / JCM 10044 / NBRC 100330 / Delta H) (Methanobacterium thermoautotrophicum).